A 140-amino-acid polypeptide reads, in one-letter code: Large ribosomal subunit protein uL16 (140 aa).

Belongs to the universal ribosomal protein uL16 family. As to quaternary structure, part of the 50S ribosomal subunit.

In terms of biological role, binds 23S rRNA and is also seen to make contacts with the A and possibly P site tRNAs. The chain is Large ribosomal subunit protein uL16 from Syntrophus aciditrophicus (strain SB).